Reading from the N-terminus, the 109-residue chain is Ycf20-like protein (109 aa).

It belongs to the ycf20 family.

This is Ycf20-like protein from Synechocystis sp. (strain ATCC 27184 / PCC 6803 / Kazusa).